Reading from the N-terminus, the 357-residue chain is Holliday junction branch migration complex subunit RuvB (357 aa).

A disordered region spans residues 1–27; the sequence is MGRFSNADGPGDDADEREVTPALTVGE. Positions 1 to 195 are large ATPase domain (RuvB-L); that stretch reads MGRFSNADGP…FGFTAHMDFY (195 aa). Residues Leu34, Arg35, Gly76, Lys79, Thr80, Ser81, 142–144, Arg185, Tyr195, and Arg232 each bind ATP; that span reads EDF. Position 80 (Thr80) interacts with Mg(2+). A small ATPAse domain (RuvB-S) region spans residues 196-266; the sequence is EPAELERVLA…IAKYALEVYD (71 aa). The segment at 269–357 is head domain (RuvB-H); that stretch reads ELGLDRLDRA…GGLGQVGLFE (89 aa). DNA is bound by residues Arg324 and Arg329.

This sequence belongs to the RuvB family. As to quaternary structure, homohexamer. Forms an RuvA(8)-RuvB(12)-Holliday junction (HJ) complex. HJ DNA is sandwiched between 2 RuvA tetramers; dsDNA enters through RuvA and exits via RuvB. An RuvB hexamer assembles on each DNA strand where it exits the tetramer. Each RuvB hexamer is contacted by two RuvA subunits (via domain III) on 2 adjacent RuvB subunits; this complex drives branch migration. In the full resolvosome a probable DNA-RuvA(4)-RuvB(12)-RuvC(2) complex forms which resolves the HJ.

The protein localises to the cytoplasm. It carries out the reaction ATP + H2O = ADP + phosphate + H(+). Its function is as follows. The RuvA-RuvB-RuvC complex processes Holliday junction (HJ) DNA during genetic recombination and DNA repair, while the RuvA-RuvB complex plays an important role in the rescue of blocked DNA replication forks via replication fork reversal (RFR). RuvA specifically binds to HJ cruciform DNA, conferring on it an open structure. The RuvB hexamer acts as an ATP-dependent pump, pulling dsDNA into and through the RuvAB complex. RuvB forms 2 homohexamers on either side of HJ DNA bound by 1 or 2 RuvA tetramers; 4 subunits per hexamer contact DNA at a time. Coordinated motions by a converter formed by DNA-disengaged RuvB subunits stimulates ATP hydrolysis and nucleotide exchange. Immobilization of the converter enables RuvB to convert the ATP-contained energy into a lever motion, pulling 2 nucleotides of DNA out of the RuvA tetramer per ATP hydrolyzed, thus driving DNA branch migration. The RuvB motors rotate together with the DNA substrate, which together with the progressing nucleotide cycle form the mechanistic basis for DNA recombination by continuous HJ branch migration. Branch migration allows RuvC to scan DNA until it finds its consensus sequence, where it cleaves and resolves cruciform DNA. The chain is Holliday junction branch migration complex subunit RuvB from Mycolicibacterium gilvum (strain PYR-GCK) (Mycobacterium gilvum (strain PYR-GCK)).